Consider the following 91-residue polypeptide: Bombyxin C-1 (91 aa).

Positions 1–19 (MKLVMLLVVVSAMLVLGGA) are cleaved as a signal peptide. Glutamine 20 carries the post-translational modification Pyrrolidone carboxylic acid. Cystine bridges form between cysteine 27–cysteine 76, cysteine 39–cysteine 89, and cysteine 75–cysteine 80. The propeptide at 47–67 (SGSQYAGYGWPWLPPFSSSRG) is c peptide like.

This sequence belongs to the insulin family. Heterodimer of a B chain and an A chain linked by two disulfide bonds.

The protein resides in the secreted. Functionally, brain peptide responsible for activation of prothoracic glands to produce ecdysone in insects. The polypeptide is Bombyxin C-1 (BBXC1) (Bombyx mori (Silk moth)).